Consider the following 1358-residue polypeptide: DNA-directed RNA polymerase subunit beta (1358 aa).

This sequence belongs to the RNA polymerase beta chain family. In terms of assembly, the RNAP catalytic core consists of 2 alpha, 1 beta, 1 beta' and 1 omega subunit. When a sigma factor is associated with the core the holoenzyme is formed, which can initiate transcription.

It carries out the reaction RNA(n) + a ribonucleoside 5'-triphosphate = RNA(n+1) + diphosphate. Its function is as follows. DNA-dependent RNA polymerase catalyzes the transcription of DNA into RNA using the four ribonucleoside triphosphates as substrates. The protein is DNA-directed RNA polymerase subunit beta of Francisella philomiragia subsp. philomiragia (strain ATCC 25017 / CCUG 19701 / FSC 153 / O#319-036).